We begin with the raw amino-acid sequence, 315 residues long: MKVLLLTGLGALFFAYYWDDNFDPASLQGARVLLTGANAGVGEELAYHYARLGSHLVLTAHTEALLQKVVGNCRKLGAPKVFYIAADMASPEAPESVVQFALDKLGGLDYLVLNHIGGAPAGTRARSPQATRWLMQVNFVSYVQLTSRALPSLTDSKGSLVVVSSLLGRVPTSFSTPYSAAKFALDGFFGSLRRELDVQDVNVAITMCVLGLRDRASAAEAVRSSTSRPRQPEHRGVPLQSQTAMFLPPTVPGARTLTETPLRGWPQPKMKSSRQKSKTEKNDGHLEPVTAWEVQVPRVRRLCRGLARPHLFGHD.

Positions 1–15 (MKVLLLTGLGALFFA) are cleaved as a signal peptide. NADP(+) is bound by residues 36 to 62 (GANA…TAHT), 87 to 88 (DM), and 114 to 116 (NHI). Substrate is bound at residue S165. Y178 acts as the Proton acceptor in catalysis. NADP(+)-binding positions include 178–182 (YSAAK) and 211–217 (GLRDRAS). The disordered stretch occupies residues 221–286 (AVRSSTSRPR…SKTEKNDGHL (66 aa)). Residues 277–286 (SKTEKNDGHL) are compositionally biased toward basic and acidic residues.

The protein belongs to the short-chain dehydrogenases/reductases (SDR) family. Highly expressed in the brain.

The protein localises to the secreted. It carries out the reaction cortisone + NADPH + H(+) = cortisol + NADP(+). In terms of biological role, unidirectional NADP(+)-dependent cortisol dehydrogenase (in vitro). The chain is Hydroxysteroid 11-beta-dehydrogenase 1-like protein (HSD11B1L) from Homo sapiens (Human).